We begin with the raw amino-acid sequence, 248 residues long: MKKIVLLRHGESAWNKENRFTGWTDVDLTEKGIAEACKAGELLKENGFNFDKAYTSYLKRAVKTLNCVLDRMDQDWIPVEKSWRLNEKHYGDLQGLNKSETAAKYGDEQVLIWRRSYDIAPNALSEDDPRNPRFENRYQEVPDAELPRTESLKDTIERIMPYWKCIIFPNLKTADEILVVAHGNSLRGIIKHLKHISDEEIVKLNLPTAVPYVFEFSDELNLEKDYFLGDPEEIRKLMEAVANQGKKK.

Substrate-binding positions include 8–15 (RHGESAWN), 21–22 (TG), Arg-60, 87–90 (EKHY), Lys-98, 114–115 (RR), and 183–184 (GN). Catalysis depends on His-9, which acts as the Tele-phosphohistidine intermediate. The Proton donor/acceptor role is filled by Glu-87.

The protein belongs to the phosphoglycerate mutase family. BPG-dependent PGAM subfamily.

It carries out the reaction (2R)-2-phosphoglycerate = (2R)-3-phosphoglycerate. It functions in the pathway carbohydrate degradation; glycolysis; pyruvate from D-glyceraldehyde 3-phosphate: step 3/5. Functionally, catalyzes the interconversion of 2-phosphoglycerate and 3-phosphoglycerate. The chain is 2,3-bisphosphoglycerate-dependent phosphoglycerate mutase from Bacteroides fragilis (strain ATCC 25285 / DSM 2151 / CCUG 4856 / JCM 11019 / LMG 10263 / NCTC 9343 / Onslow / VPI 2553 / EN-2).